The sequence spans 595 residues: Aspartate--tRNA(Asp/Asn) ligase (595 aa).

Glutamate 175 contributes to the L-aspartate binding site. Residues 199 to 202 are aspartate; sequence QQYK. L-aspartate contacts are provided by arginine 221 and histidine 454. 221–223 provides a ligand contact to ATP; sequence RDE. Glutamate 488 serves as a coordination point for ATP. Residue arginine 495 coordinates L-aspartate. 540–543 contributes to the ATP binding site; it reads GIDR.

This sequence belongs to the class-II aminoacyl-tRNA synthetase family. Type 1 subfamily. In terms of assembly, homodimer.

The protein localises to the cytoplasm. The enzyme catalyses tRNA(Asx) + L-aspartate + ATP = L-aspartyl-tRNA(Asx) + AMP + diphosphate. Aspartyl-tRNA synthetase with relaxed tRNA specificity since it is able to aspartylate not only its cognate tRNA(Asp) but also tRNA(Asn). Reaction proceeds in two steps: L-aspartate is first activated by ATP to form Asp-AMP and then transferred to the acceptor end of tRNA(Asp/Asn). The polypeptide is Aspartate--tRNA(Asp/Asn) ligase (Sinorhizobium fredii (strain NBRC 101917 / NGR234)).